Reading from the N-terminus, the 156-residue chain is Small ribosomal subunit protein uS7 (156 aa).

It belongs to the universal ribosomal protein uS7 family. In terms of assembly, part of the 30S ribosomal subunit. Contacts proteins S9 and S11.

One of the primary rRNA binding proteins, it binds directly to 16S rRNA where it nucleates assembly of the head domain of the 30S subunit. Is located at the subunit interface close to the decoding center, probably blocks exit of the E-site tRNA. The chain is Small ribosomal subunit protein uS7 from Anoxybacillus flavithermus (strain DSM 21510 / WK1).